Here is a 530-residue protein sequence, read N- to C-terminus: Ubiquitin carboxyl-terminal hydrolase 17-like protein 20 (530 aa).

Positions A80–K375 constitute a USP domain. Catalysis depends on C89, which acts as the Nucleophile. H334 serves as the catalytic Proton acceptor. 2 stretches are compositionally biased toward basic and acidic residues: residues S382–R392 and D398–P413. 2 disordered regions span residues S382–P413 and R509–Q530. Over residues G510–R524 the composition is skewed to basic residues.

Belongs to the peptidase C19 family. USP17 subfamily.

The protein resides in the nucleus. The protein localises to the endoplasmic reticulum. The catalysed reaction is Thiol-dependent hydrolysis of ester, thioester, amide, peptide and isopeptide bonds formed by the C-terminal Gly of ubiquitin (a 76-residue protein attached to proteins as an intracellular targeting signal).. Its function is as follows. Deubiquitinating enzyme that removes conjugated ubiquitin from specific proteins to regulate different cellular processes that may include cell proliferation, progression through the cell cycle, apoptosis, cell migration, and the cellular response to viral infection. The polypeptide is Ubiquitin carboxyl-terminal hydrolase 17-like protein 20 (USP17L20) (Homo sapiens (Human)).